A 612-amino-acid polypeptide reads, in one-letter code: Dihydroxy-acid dehydratase (612 aa).

Asp81 contacts Mg(2+). A [2Fe-2S] cluster-binding site is contributed by Cys122. Asp123 and Lys124 together coordinate Mg(2+). An N6-carboxylysine modification is found at Lys124. Cys195 provides a ligand contact to [2Fe-2S] cluster. Position 491 (Glu491) interacts with Mg(2+). The Proton acceptor role is filled by Ser517.

The protein belongs to the IlvD/Edd family. As to quaternary structure, homodimer. It depends on [2Fe-2S] cluster as a cofactor. The cofactor is Mg(2+).

The catalysed reaction is (2R)-2,3-dihydroxy-3-methylbutanoate = 3-methyl-2-oxobutanoate + H2O. It carries out the reaction (2R,3R)-2,3-dihydroxy-3-methylpentanoate = (S)-3-methyl-2-oxopentanoate + H2O. The protein operates within amino-acid biosynthesis; L-isoleucine biosynthesis; L-isoleucine from 2-oxobutanoate: step 3/4. Its pathway is amino-acid biosynthesis; L-valine biosynthesis; L-valine from pyruvate: step 3/4. Its function is as follows. Functions in the biosynthesis of branched-chain amino acids. Catalyzes the dehydration of (2R,3R)-2,3-dihydroxy-3-methylpentanoate (2,3-dihydroxy-3-methylvalerate) into 2-oxo-3-methylpentanoate (2-oxo-3-methylvalerate) and of (2R)-2,3-dihydroxy-3-methylbutanoate (2,3-dihydroxyisovalerate) into 2-oxo-3-methylbutanoate (2-oxoisovalerate), the penultimate precursor to L-isoleucine and L-valine, respectively. In Rhizobium rhizogenes (strain K84 / ATCC BAA-868) (Agrobacterium radiobacter), this protein is Dihydroxy-acid dehydratase.